The following is a 71-amino-acid chain: Beta-defensin 2 (71 aa).

Residues 1 to 20 (MRTLCSLLLICCLLFSYTTP) form the signal peptide. 3 disulfides stabilise this stretch: Cys37/Cys66, Cys44/Cys59, and Cys49/Cys67.

Belongs to the beta-defensin family. In terms of tissue distribution, kidney, uterus and to a lesser extent in heart.

It is found in the secreted. In terms of biological role, has bactericidal activity. The protein is Beta-defensin 2 (Defb2) of Mus musculus (Mouse).